The chain runs to 470 residues: UDP-N-acetylmuramoylalanine--D-glutamate ligase (470 aa).

120–126 is an ATP binding site; that stretch reads GSNGKTT.

This sequence belongs to the MurCDEF family.

Its subcellular location is the cytoplasm. It carries out the reaction UDP-N-acetyl-alpha-D-muramoyl-L-alanine + D-glutamate + ATP = UDP-N-acetyl-alpha-D-muramoyl-L-alanyl-D-glutamate + ADP + phosphate + H(+). Its pathway is cell wall biogenesis; peptidoglycan biosynthesis. Its function is as follows. Cell wall formation. Catalyzes the addition of glutamate to the nucleotide precursor UDP-N-acetylmuramoyl-L-alanine (UMA). The protein is UDP-N-acetylmuramoylalanine--D-glutamate ligase of Nitrosomonas eutropha (strain DSM 101675 / C91 / Nm57).